The following is a 558-amino-acid chain: Potassium-transporting ATPase potassium-binding subunit 2 (558 aa).

A run of 12 helical transmembrane segments spans residues 1–21 (MSIVLFLIVFILLSLIVSRYL), 60–80 (IKHFLLFNGLMGGLSFVLLLI), 129–149 (VITFLMFTSAASGYAVCIAML), 169–189 (FIVRVLIPFALIISLFLISQG), 246–266 (WSNYAEALSMMLIPGSLVFLF), 281–301 (IMIFVAMFVMFIGFLVTCLYF), 326–346 (FGIGLSALFTTITTAFTTGTV), 353–373 (LTPLGGMVPMVLMMLNAVFGG), 376–396 (VGLMNMLIYVMLTVFICSLMI), 415–435 (IALSFLVHPLLILVFSALAFI), 485–505 (IVMLLARYIPIVLQILIVSSL), and 523–543 (LFFSSVLIIFIILLSGLTFLP).

It belongs to the KdpA family. In terms of assembly, the system is composed of three essential subunits: KdpA, KdpB and KdpC.

It is found in the cell membrane. Functionally, part of the high-affinity ATP-driven potassium transport (or Kdp) system, which catalyzes the hydrolysis of ATP coupled with the electrogenic transport of potassium into the cytoplasm. This subunit binds the extracellular potassium ions and delivers the ions to the membrane domain of KdpB through an intramembrane tunnel. This Staphylococcus aureus (strain Mu50 / ATCC 700699) protein is Potassium-transporting ATPase potassium-binding subunit 2.